A 380-amino-acid chain; its full sequence is Pregnancy-associated glycoprotein 4 (380 aa).

An N-terminal signal peptide occupies residues 1–15 (MKWLVLLGLVAFSEC). A propeptide spans 16–53 (IFKIPLRRVKTMRKTLSGKNMLNDVLKEHPYRLPQISF) (activation peptide). One can recognise a Peptidase A1 domain in the interval 71–377 (YVGNITIGTP…DRGNDRIGLA (307 aa)). The N-linked (GlcNAc...) asparagine glycan is linked to N74. The active site involves D89. C102 and C107 are oxidised to a cystine. An N-linked (GlcNAc...) asparagine glycan is attached at N125. C261 and C265 are oxidised to a cystine. D270 is a catalytic residue. C303 and C337 are oxidised to a cystine.

This sequence belongs to the peptidase A1 family. Trophoblast and placental tissue. Produced specifically in the invasive binucleate cells of the placenta.

Its subcellular location is the secreted. It localises to the extracellular space. This is Pregnancy-associated glycoprotein 4 from Ovis aries (Sheep).